Consider the following 100-residue polypeptide: Large ribosomal subunit protein uL23 (100 aa).

The protein belongs to the universal ribosomal protein uL23 family. Part of the 50S ribosomal subunit. Contacts protein L29, and trigger factor when it is bound to the ribosome.

In terms of biological role, one of the early assembly proteins it binds 23S rRNA. One of the proteins that surrounds the polypeptide exit tunnel on the outside of the ribosome. Forms the main docking site for trigger factor binding to the ribosome. The polypeptide is Large ribosomal subunit protein uL23 (Mycobacterium leprae (strain Br4923)).